A 90-amino-acid polypeptide reads, in one-letter code: Large ribosomal subunit protein bL27 (90 aa).

Positions 1–21 are disordered; the sequence is MASKKAGGSTRNGRDSEAKRL.

It belongs to the bacterial ribosomal protein bL27 family.

This is Large ribosomal subunit protein bL27 from Neisseria meningitidis serogroup C (strain 053442).